A 713-amino-acid chain; its full sequence is Major surface-labeled trophozoite antigen 417 (713 aa).

Residues 1 to 17 form the signal peptide; it reads MFGRFLLAIVILQLART. At 18 to 679 the chain is on the extracellular side; sequence ACTQEADDGK…KDSGSTNKSG (662 aa). Residues Asn-289 and Asn-676 are each glycosylated (N-linked (GlcNAc...) asparagine). Residues 680–708 form a helical membrane-spanning segment; it reads LSTGAIAGISVAVIVVVGGLIGFLCWWFL. At 709–713 the chain is on the cytoplasmic side; that stretch reads CRGKA.

It belongs to the Giardia variant surface protein family.

Its subcellular location is the cell membrane. The protein is Major surface-labeled trophozoite antigen 417 (TSA 417) of Giardia intestinalis (Giardia lamblia).